The primary structure comprises 830 residues: Leucine--tRNA ligase (830 aa).

The short motif at 48 to 58 (PYPSGAIHMGH) is the 'HIGH' region element. The 'KMSKS' region signature appears at 596–600 (KMSKS). Lys599 contributes to the ATP binding site.

Belongs to the class-I aminoacyl-tRNA synthetase family.

It is found in the cytoplasm. It catalyses the reaction tRNA(Leu) + L-leucine + ATP = L-leucyl-tRNA(Leu) + AMP + diphosphate. The protein is Leucine--tRNA ligase of Helicobacter hepaticus (strain ATCC 51449 / 3B1).